Reading from the N-terminus, the 63-residue chain is MDPQDCTCAAGDSCSCAGSCKCKNCRCQSCRKSCCSCCPASCSNCAKGCVCKEPSSSKCSCCH.

Residues 1-30 (MDPQDCTCAAGDSCSCAGSCKCKNCRCQSC) form a beta region. Positions 6, 8, 14, 16, 20, 22, 25, 27, 30, 34, 35, 37, 38, 42, 45, 49, 51, 59, 61, and 62 each coordinate a divalent metal cation. The tract at residues 31–63 (RKSCCSCCPASCSNCAKGCVCKEPSSSKCSCCH) is alpha.

Belongs to the metallothionein superfamily. Type 1 family.

In terms of biological role, metallothioneins have a high content of cysteine residues that bind various heavy metals. This Columba livia (Rock dove) protein is Metallothionein-2.